We begin with the raw amino-acid sequence, 171 residues long: RNA pyrophosphohydrolase (171 aa).

In terms of domain architecture, Nudix hydrolase spans glycine 6–lysine 149. The Nudix box signature appears at glycine 39–glycine 60.

Belongs to the Nudix hydrolase family. RppH subfamily. It depends on a divalent metal cation as a cofactor.

Its function is as follows. Accelerates the degradation of transcripts by removing pyrophosphate from the 5'-end of triphosphorylated RNA, leading to a more labile monophosphorylated state that can stimulate subsequent ribonuclease cleavage. The sequence is that of RNA pyrophosphohydrolase from Teredinibacter turnerae (strain ATCC 39867 / T7901).